The chain runs to 33 residues: Alpha-amanitin proprotein (33 aa).

Residues 1-10 constitute a propeptide that is removed on maturation; the sequence is MSDINATRLP. A (3R,4R)-4,5-dihydroxyisoleucine; in form alpha-amanitin modification is found at Ile-11. A (3R,4S)-4-hydroxyisoleucine; in form gamma-amanitin modification is found at Ile-11. Residues 11 to 18 constitute a cross-link (cyclopeptide (Ile-Pro)); the sequence is IWGIGCNP. A cross-link (2'-cysteinyl-6'-hydroxytryptophan sulfoxide (Trp-Cys)) is located at residues 12–16; it reads WGIGC. At Pro-18 the chain carries 4-hydroxyproline. Residues 19–33 constitute a propeptide that is removed on maturation; sequence CVGDEVTALLTRGEA.

The protein belongs to the MSDIN fungal toxin family. Processed by the macrocyclase-peptidase enzyme POPB to yield a toxic cyclic decapeptide. POPB first removes 10 residues from the N-terminus. Conformational trapping of the remaining peptide forces the enzyme to release this intermediate rather than proceed to macrocyclization. The enzyme rebinds the remaining peptide in a different conformation and catalyzes macrocyclization of the N-terminal 8 residues.

Major toxin belonging to the bicyclic octapeptides amatoxins that acts by binding non-competitively to RNA polymerase II and greatly slowing the elongation of transcripts from target promoters. In Amanita fuligineoides, this protein is Alpha-amanitin proprotein.